Here is a 433-residue protein sequence, read N- to C-terminus: Homogentisate 1,2-dioxygenase (433 aa).

Histidine 288 acts as the Proton acceptor in catalysis. Residues histidine 331 and glutamate 337 each coordinate Fe cation. 2 residues coordinate homogentisate: tyrosine 346 and histidine 367. Histidine 367 provides a ligand contact to Fe cation.

Belongs to the homogentisate dioxygenase family. In terms of assembly, hexamer; dimer of trimers. Fe cation serves as cofactor.

It carries out the reaction homogentisate + O2 = 4-maleylacetoacetate + H(+). It participates in amino-acid degradation; L-phenylalanine degradation; acetoacetate and fumarate from L-phenylalanine: step 4/6. Involved in the catabolism of homogentisate (2,5-dihydroxyphenylacetate or 2,5-OH-PhAc), a central intermediate in the degradation of phenylalanine and tyrosine. Catalyzes the oxidative ring cleavage of the aromatic ring of homogentisate to yield maleylacetoacetate. In Pseudomonas putida (strain GB-1), this protein is Homogentisate 1,2-dioxygenase.